The following is a 4644-amino-acid chain: Cytoplasmic dynein 1 heavy chain 1 (4644 aa).

Serine 2 is subject to N-acetylserine. The stem stretch occupies residues 2-1865; the sequence is SETGGGEDGS…SIQMANAKFN (1864 aa). 4 coiled-coil regions span residues 48–69, 179–200, 453–476, and 541–564; these read AALE…FLSD, SVEK…NIEI, AHRK…QLRA, and TEAW…RITA. At serine 68 the chain carries Phosphoserine. Positions 446–701 are interaction with DYNC1I2; the sequence is MVWRINPAHR…NTQEIFDDWA (256 aa). The interval 649–800 is interaction with DYNC1LI2; sequence AKQIDRQLTA…EKVEERNTIS (152 aa). At lysine 1123 the chain carries N6-acetyllysine. Residues 1169-1201 adopt a coiled-coil conformation; it reads TYVQSLKRKIKQFEKQVELYRNGQRLLEKQRFQ. Position 1228 is a phosphoserine (serine 1228). Coiled-coil stretches lie at residues 1229 to 1250 and 1355 to 1371; these read AIQQ…AVES and RKLR…LKNF. AAA stretches follow at residues 1866–2097, 2178–2450, 2554–2803, and 2897–3166; these read YGFE…VLVS, EELK…LTRL, EVET…WVRG, and VFYE…GGRT. Residues 1904-1911 and 2222-2229 contribute to the ATP site; these read GPAGTGKT and GPSGSGKS. Residues 2389–2409 form a disordered region; it reads EDEAQRRRKGKEDEGEEAASP. ATP contacts are provided by residues 2593–2600 and 2935–2942; these read GPPGSGKT and GVSGAGKT. Coiled coils occupy residues 3187–3273, 3394–3498, and 3735–3798; these read EKRS…ADKQ, AIAQ…KNQM, and EFQL…VSQQ. The interval 3187-3498 is stalk; sequence EKRSELEEQQ…KTSETFKNQM (312 aa). Residue lysine 3478 is modified to N6-acetyllysine. 2 AAA regions span residues 3551-3780 and 4003-4219; these read LSNA…EVTR and AHMF…TVDT. The residue at position 4160 (serine 4160) is a Phosphoserine. An N6-acetyllysine modification is found at lysine 4281. Residue threonine 4364 is modified to Phosphothreonine.

The protein belongs to the dynein heavy chain family. Homodimer. The cytoplasmic dynein 1 complex consists of two catalytic heavy chains (HCs) and a number of non-catalytic subunits presented by intermediate chains (ICs), light intermediate chains (LICs) and light chains (LCs); the composition seems to vary in respect to the IC, LIC and LC composition. The heavy chain homodimer serves as a scaffold for the probable homodimeric assembly of the respective non-catalytic subunits. The ICs and LICs bind directly to the HC dimer and dynein LCs assemble on the IC dimer. Interacts with DYNC1LI1; DYNC1LI1 and DYNC1LI2 bind mutually exclusive to DYNC1H1. Interacts with DYNC1LI2; DYNC1LI1 and DYNC1LI2 bind mutually exclusive to DYNC1H1. Interacts with DYNC1I2. Interacts with BICD2. Interacts with DNALI1.

The protein localises to the cytoplasm. Its subcellular location is the cytoskeleton. Functionally, cytoplasmic dynein 1 acts as a motor for the intracellular retrograde motility of vesicles and organelles along microtubules. Dynein has ATPase activity; the force-producing power stroke is thought to occur on release of ADP. Plays a role in mitotic spindle assembly and metaphase plate congression. In Rattus norvegicus (Rat), this protein is Cytoplasmic dynein 1 heavy chain 1 (Dync1h1).